Reading from the N-terminus, the 96-residue chain is Large ribosomal subunit protein bL28 (96 aa).

The protein belongs to the bacterial ribosomal protein bL28 family.

In Leptospira biflexa serovar Patoc (strain Patoc 1 / Ames), this protein is Large ribosomal subunit protein bL28.